The chain runs to 338 residues: Citramalyl-CoA lyase, mitochondrial (338 aa).

Residues 1 to 20 constitute a mitochondrion transit peptide; that stretch reads MALCVLRNTVRGAAALPRLK. Residues Y48, K55, and K59 each contribute to the substrate site. 3 positions are modified to N6-acetyllysine: K55, K59, and K64. N6-acetyllysine; alternate occurs at positions 80 and 90. N6-succinyllysine; alternate occurs at positions 80 and 90. Position 105 (R105) interacts with substrate. Positions 169 and 204 each coordinate Mg(2+). Substrate is bound at residue 270-271; that stretch reads IH. K307 bears the N6-succinyllysine mark. Residue D318 is part of the active site.

This sequence belongs to the HpcH/HpaI aldolase family. Citrate lyase beta subunit-like subfamily. Homotrimer. It depends on Mg(2+) as a cofactor. As to expression, detected in brown fat, brain, liver, kidney, heart, skeletal muscle and ovary (at protein level).

The protein localises to the mitochondrion. It catalyses the reaction glyoxylate + acetyl-CoA + H2O = (S)-malate + CoA + H(+). The catalysed reaction is propanoyl-CoA + glyoxylate + H2O = 3-methylmalate + CoA + H(+). The enzyme catalyses (3S)-citramalyl-CoA = pyruvate + acetyl-CoA. It carries out the reaction (S)-malyl-CoA + H2O = (S)-malate + CoA + H(+). Its function is as follows. Mitochondrial citramalyl-CoA lyase indirectly involved in the vitamin B12 metabolism. Converts citramalyl-CoA into acetyl-CoA and pyruvate in the C5-dicarboxylate catabolism pathway. The C5-dicarboxylate catabolism pathway is required to detoxify itaconate, a vitamin B12-poisoning metabolite. Also acts as a malate synthase in vitro, converting glyoxylate and acetyl-CoA to malate. Also displays malyl-CoA thioesterase activity. Also acts as a beta-methylmalate synthase in vitro, by mediating conversion of glyoxylate and propionyl-CoA to beta-methylmalate. Also has very weak citramalate synthase activity in vitro. In Mus musculus (Mouse), this protein is Citramalyl-CoA lyase, mitochondrial.